A 606-amino-acid polypeptide reads, in one-letter code: MIHPPAQKQAARRYTHSVKIGNLYVGSDHSIKTQSMTTTPTADVDATVAQICALVEARCEIARVTVQGIKEAQACEHIKERLIALGIDVPLVADIHFFPQAAMHVADFVDKVRINPGNFVDKRNMFTGKIYTDKHYADSLLRLEEKFSPLVEKCKRLGKAMRIGVNHGSLSERVMQRYGDTIEGMVVSALEYIEVCEKLGYRDVVFSMKSSNPKVMVAAYRQLAKDLDARGWHYPLHLGVTEAGMGMDGIIKSSVGIGTLLTEGLGDTIRCSLTGCPTQEIPVCESLLKHTTTYLNLPRKNNPFALENSESFVNASKKITKTTPWGSVYGVFIKLNEDHMLNTPVEQLLEQLGIHPENGKKDFTTPDGVVVPKSFIGTSVLKKLEQHFIVFHHHEVPCLYDYNHEIWNQEEVLSSPFVHFHASPPFIHSTRDFFEKKQGEQQPVKLVFSKDLDDECEAAVAIATEFGALLLDGLGEAVILDLPNIPLSTVREIAFGTLQSAGVRLVKTEYISCPGCGRTLFDLPEVTKRIHERTQHLVGLKIAVMGCIVNGPGEMADADFGFVGSKTGMVDLYVKHTCVKAHIPMEQAEDELVLLLKEHGVWKDPE.

Residues Cys-513, Cys-516, Cys-547, and Glu-554 each contribute to the [4Fe-4S] cluster site.

Belongs to the IspG family. [4Fe-4S] cluster is required as a cofactor.

The catalysed reaction is (2E)-4-hydroxy-3-methylbut-2-enyl diphosphate + oxidized [flavodoxin] + H2O + 2 H(+) = 2-C-methyl-D-erythritol 2,4-cyclic diphosphate + reduced [flavodoxin]. The protein operates within isoprenoid biosynthesis; isopentenyl diphosphate biosynthesis via DXP pathway; isopentenyl diphosphate from 1-deoxy-D-xylulose 5-phosphate: step 5/6. Its function is as follows. Converts 2C-methyl-D-erythritol 2,4-cyclodiphosphate (ME-2,4cPP) into 1-hydroxy-2-methyl-2-(E)-butenyl 4-diphosphate. The polypeptide is 4-hydroxy-3-methylbut-2-en-1-yl diphosphate synthase (flavodoxin) (Chlamydia abortus (strain DSM 27085 / S26/3) (Chlamydophila abortus)).